A 530-amino-acid polypeptide reads, in one-letter code: Phosphoenolpyruvate carboxykinase (ATP) (530 aa).

The substrate site is built by arginine 59, tyrosine 198, and lysine 204. Residues lysine 204, histidine 223, and 239–247 each bind ATP; that span reads GLSGTGKTT. Mn(2+) is bound by residues lysine 204 and histidine 223. Aspartate 260 is a binding site for Mn(2+). ATP-binding positions include glutamate 288, arginine 325, 440 to 441, and threonine 446; that span reads RI. Substrate is bound at residue arginine 325.

Belongs to the phosphoenolpyruvate carboxykinase (ATP) family. Mn(2+) serves as cofactor.

It localises to the cytoplasm. The enzyme catalyses oxaloacetate + ATP = phosphoenolpyruvate + ADP + CO2. It functions in the pathway carbohydrate biosynthesis; gluconeogenesis. Functionally, involved in the gluconeogenesis. Catalyzes the conversion of oxaloacetate (OAA) to phosphoenolpyruvate (PEP) through direct phosphoryl transfer between the nucleoside triphosphate and OAA. This Azobacteroides pseudotrichonymphae genomovar. CFP2 protein is Phosphoenolpyruvate carboxykinase (ATP).